Reading from the N-terminus, the 418-residue chain is Tryptophan synthase beta chain (418 aa).

Position 109 is an N6-(pyridoxal phosphate)lysine (lysine 109).

Belongs to the TrpB family. In terms of assembly, tetramer of two alpha and two beta chains. Requires pyridoxal 5'-phosphate as cofactor.

It catalyses the reaction (1S,2R)-1-C-(indol-3-yl)glycerol 3-phosphate + L-serine = D-glyceraldehyde 3-phosphate + L-tryptophan + H2O. Its pathway is amino-acid biosynthesis; L-tryptophan biosynthesis; L-tryptophan from chorismate: step 5/5. The beta subunit is responsible for the synthesis of L-tryptophan from indole and L-serine. This is Tryptophan synthase beta chain from Thermus thermophilus (strain ATCC 27634 / DSM 579 / HB8).